The chain runs to 327 residues: Pyruvate dehydrogenase E1 component subunit beta (327 aa).

Residue glutamate 63 participates in thiamine diphosphate binding.

Heterodimer of an alpha and a beta chain. Thiamine diphosphate serves as cofactor.

The enzyme catalyses N(6)-[(R)-lipoyl]-L-lysyl-[protein] + pyruvate + H(+) = N(6)-[(R)-S(8)-acetyldihydrolipoyl]-L-lysyl-[protein] + CO2. Functionally, the pyruvate dehydrogenase complex catalyzes the overall conversion of pyruvate to acetyl-CoA and CO(2). It contains multiple copies of three enzymatic components: pyruvate dehydrogenase (E1), dihydrolipoamide acetyltransferase (E2) and lipoamide dehydrogenase (E3). This Mycoplasma pneumoniae (strain ATCC 29342 / M129 / Subtype 1) (Mycoplasmoides pneumoniae) protein is Pyruvate dehydrogenase E1 component subunit beta (pdhB).